Reading from the N-terminus, the 186-residue chain is Nicotinamide-nucleotide adenylyltransferase (186 aa).

This sequence belongs to the archaeal NMN adenylyltransferase family.

The protein localises to the cytoplasm. It carries out the reaction beta-nicotinamide D-ribonucleotide + ATP + H(+) = diphosphate + NAD(+). Its pathway is cofactor biosynthesis; NAD(+) biosynthesis; NAD(+) from nicotinamide D-ribonucleotide: step 1/1. This chain is Nicotinamide-nucleotide adenylyltransferase, found in Thermococcus sibiricus (strain DSM 12597 / MM 739).